Reading from the N-terminus, the 397-residue chain is Tryptophan synthase beta chain (397 aa).

K91 carries the N6-(pyridoxal phosphate)lysine modification.

Belongs to the TrpB family. In terms of assembly, tetramer of two alpha and two beta chains. It depends on pyridoxal 5'-phosphate as a cofactor.

It catalyses the reaction (1S,2R)-1-C-(indol-3-yl)glycerol 3-phosphate + L-serine = D-glyceraldehyde 3-phosphate + L-tryptophan + H2O. The protein operates within amino-acid biosynthesis; L-tryptophan biosynthesis; L-tryptophan from chorismate: step 5/5. Functionally, the beta subunit is responsible for the synthesis of L-tryptophan from indole and L-serine. The chain is Tryptophan synthase beta chain from Bacillus cereus (strain ATCC 14579 / DSM 31 / CCUG 7414 / JCM 2152 / NBRC 15305 / NCIMB 9373 / NCTC 2599 / NRRL B-3711).